We begin with the raw amino-acid sequence, 241 residues long: Ubiquinone biosynthesis O-methyltransferase (241 aa).

Positions 44, 63, 84, and 128 each coordinate S-adenosyl-L-methionine.

This sequence belongs to the methyltransferase superfamily. UbiG/COQ3 family.

It carries out the reaction a 3-demethylubiquinol + S-adenosyl-L-methionine = a ubiquinol + S-adenosyl-L-homocysteine + H(+). The enzyme catalyses a 3-(all-trans-polyprenyl)benzene-1,2-diol + S-adenosyl-L-methionine = a 2-methoxy-6-(all-trans-polyprenyl)phenol + S-adenosyl-L-homocysteine + H(+). It functions in the pathway cofactor biosynthesis; ubiquinone biosynthesis. Functionally, O-methyltransferase that catalyzes the 2 O-methylation steps in the ubiquinone biosynthetic pathway. This is Ubiquinone biosynthesis O-methyltransferase from Hydrogenovibrio crunogenus (strain DSM 25203 / XCL-2) (Thiomicrospira crunogena).